The primary structure comprises 419 residues: MTTQLEQAWEIAKQRYAAVGVDVEEALRQLDRLPVSMHCWQGDDVAGFENPAGSLTGGIQATGNYPGKARNAEELRADLEQALSLIPGPKRLNLHAIYLESDAPVARNEIKPEHFKNWVTWAKANKLGLDFNPSCFSHPLSADGFTLSHANDEIRQFWIDHCKASRRVSAYFGEQLGTPSVMNIWVPDGMKDITVDRFAPRQRLLNALDEVISEKLDPAHHIDAVESKLFGIGAESYTVGSNEFYMGYATSRQTALCLDAGHFHPTEVISDKISAAMLYIPRLLLHVSRPVRWDSDHVVLLDDETQAIASEIIRHNLFDRVHIGLDFFDASINRIAAWVIGTRNMKKALLRALLEPTAQLRQLENDGDYTARLALLEEQKSLPWQAIWEMYCQRHDTPAGSQWLDNVRAYENAVLSQRG.

Positions 262, 294, and 296 each coordinate Mn(2+).

The protein belongs to the rhamnose isomerase family. As to quaternary structure, homotetramer. Requires Mn(2+) as cofactor.

Its subcellular location is the cytoplasm. It catalyses the reaction L-rhamnopyranose = L-rhamnulose. Its pathway is carbohydrate degradation; L-rhamnose degradation; glycerone phosphate from L-rhamnose: step 1/3. Functionally, catalyzes the interconversion of L-rhamnose and L-rhamnulose. The sequence is that of L-rhamnose isomerase from Klebsiella pneumoniae (strain 342).